A 356-amino-acid polypeptide reads, in one-letter code: Competence protein ComGA (356 aa).

144-151 (GPTGSGKT) lines the ATP pocket.

Belongs to the GSP E family.

Its subcellular location is the cell membrane. Required for uptake of DNA by competent cells. In Bacillus subtilis (strain 168), this protein is Competence protein ComGA (comGA).